The primary structure comprises 85 residues: Glutaredoxin 1 (85 aa).

The 85-residue stretch at M1 to A85 folds into the Glutaredoxin domain. Cysteines 11 and 14 form a disulfide.

It belongs to the glutaredoxin family. In terms of assembly, monomer.

In terms of biological role, the disulfide bond functions as an electron carrier in the glutathione-dependent synthesis of deoxyribonucleotides by the enzyme ribonucleotide reductase. In addition, it is also involved in reducing some disulfides in a coupled system with glutathione reductase. In Shigella flexneri, this protein is Glutaredoxin 1 (grxA).